The sequence spans 166 residues: MRIDTSELCDIYLDQVDVVDPIFSSFGGVQAFYGKVTTVKCFETNGLIEEILEENGEGRVLVIDGGGSIRRALIDAELARLAADNHWEGIIVYGAIRQLSELENIEIGIHALAPIPVSADESNYGESDIPVNFGGVTFFPEDYIYADLTGIILSQEPLDLDELNAE.

This sequence belongs to the RraA family. In terms of assembly, homotrimer. Binds to both RNA-binding sites in the C-terminal region of Rne and to RhlB.

The protein resides in the cytoplasm. Functionally, globally modulates RNA abundance by binding to RNase E (Rne) and regulating its endonucleolytic activity. Can modulate Rne action in a substrate-dependent manner by altering the composition of the degradosome. Modulates RNA-binding and helicase activities of the degradosome. In Actinobacillus succinogenes (strain ATCC 55618 / DSM 22257 / CCUG 43843 / 130Z), this protein is Regulator of ribonuclease activity A.